The chain runs to 1227 residues: Multifunctional 2-oxoglutarate metabolism enzyme (1227 aa).

The 2-oxoglutarate dehydrogenase E1, N-terminal part stretch occupies residues 1-41 (MSSSPSPFGQNEWLVEEMYRKFRDDPSSVDPSWHEFLVDYS). Positions 23–37 (RDDPSSVDPSWHEFL) are enriched in basic and acidic residues. The segment at 23–102 (RDDPSSVDPS…SATPAKGDES (80 aa)) is disordered. Residues 42 to 88 (PEPTTDSASNGRTTTAAPVTPPTPAPAPAPEPKAAPKPAAKTEAKPA) are linker. Positions 43 to 53 (EPTTDSASNGR) are enriched in polar residues. Residues 60-76 (VTPPTPAPAPAPEPKAA) are compositionally biased toward pro residues. Over residues 88–97 (AKPAKSATPA) the composition is skewed to low complexity. The interval 89–335 (KPAKSATPAK…LRTIHQLLLD (247 aa)) is succinyltransferase E2. The active-site Proton acceptor; for succinyltransferase activity is histidine 314. The tract at residues 336-1227 (DDFFDEIFRE…QQEILDTAFG (892 aa)) is 2-oxoglutarate dehydrogenase E1, C-terminal part. Residue arginine 540 participates in thiamine diphosphate binding. Residues histidine 579 and serine 604 each contribute to the 2-oxoglutarate site. Serine 604, leucine 606, aspartate 645, alanine 646, alanine 647, and asparagine 678 together coordinate thiamine diphosphate. Aspartate 645 provides a ligand contact to Mg(2+). 2 residues coordinate Mg(2+): asparagine 678 and isoleucine 680. A coiled-coil region spans residues 783–814 (DISMKEAEDALRDYQGQLERVFNEVRELEKHE). Histidine 1020 serves as a coordination point for 2-oxoglutarate. The acetyl-CoA site is built by threonine 1038, arginine 1054, lysine 1089, serine 1092, glutamine 1142, arginine 1149, and arginine 1150.

It belongs to the 2-oxoacid dehydrogenase family. Kgd subfamily. Homodimer. Interacts with the FHA domain of unphosphorylated GarA. The 2-oxoglutarate dehydrogenase (ODH) complex contains multiple copies of three enzymatic components: 2-oxoglutarate dehydrogenase (E1), dihydrolipoamide succinyltransferase (E2) and lipoamide dehydrogenase (E3). Requires Mg(2+) as cofactor. Thiamine diphosphate serves as cofactor.

The enzyme catalyses glyoxylate + 2-oxoglutarate + H(+) = 2-hydroxy-3-oxoadipate + CO2. It catalyses the reaction 2-oxoglutarate + H(+) = succinate semialdehyde + CO2. It carries out the reaction N(6)-[(R)-lipoyl]-L-lysyl-[protein] + 2-oxoglutarate + H(+) = N(6)-[(R)-S(8)-succinyldihydrolipoyl]-L-lysyl-[protein] + CO2. The catalysed reaction is N(6)-[(R)-dihydrolipoyl]-L-lysyl-[protein] + succinyl-CoA = N(6)-[(R)-S(8)-succinyldihydrolipoyl]-L-lysyl-[protein] + CoA. Its pathway is carbohydrate metabolism; tricarboxylic acid cycle; succinate from 2-oxoglutarate (transferase route): step 1/2. It functions in the pathway carbohydrate metabolism; tricarboxylic acid cycle; succinyl-CoA from 2-oxoglutarate (dehydrogenase route): step 1/1. With respect to regulation, alpha-ketoglutarate dehydrogenase and decarboxylase activities are inhibited by unphosphorylated GarA, and allosterically activated by acetyl-CoA, the main substrate of the TCA cycle. Both the phosphoadenosine and acetyl moieties of acetyl-CoA are important for activation because neither CoA nor the synthetic compound S-(2-acetamidoethyl)-ethanethioate (which mimics the terminal acetyl-phosphopantetheine group of acetyl-CoA) has an activation effect. In terms of biological role, shows three enzymatic activities that share a first common step, the attack of thiamine-PP on 2-oxoglutarate (alpha-ketoglutarate, KG), leading to the formation of an enamine-thiamine-PP intermediate upon decarboxylation. Thus, displays KGD activity, catalyzing the decarboxylation from five-carbon 2-oxoglutarate to four-carbon succinate semialdehyde (SSA). Also catalyzes C-C bond formation between the activated aldehyde formed after decarboxylation of alpha-ketoglutarate and the carbonyl of glyoxylate (GLX), to yield 2-hydroxy-3-oxoadipate (HOA), which spontaneously decarboxylates to form 5-hydroxylevulinate (HLA). And is also a component of the 2-oxoglutarate dehydrogenase (ODH) complex, that catalyzes the overall conversion of 2-oxoglutarate to succinyl-CoA and CO(2). The KG decarboxylase and KG dehydrogenase reactions provide two alternative, tightly regulated, pathways connecting the oxidative and reductive branches of the TCA cycle. The sequence is that of Multifunctional 2-oxoglutarate metabolism enzyme (kgd) from Mycolicibacterium smegmatis (strain ATCC 700084 / mc(2)155) (Mycobacterium smegmatis).